Here is a 309-residue protein sequence, read N- to C-terminus: Glutaminase (309 aa).

Substrate is bound by residues Ser65, Asn117, Glu162, Asn169, Tyr193, Tyr245, and Val263.

This sequence belongs to the glutaminase family. As to quaternary structure, homotetramer.

It catalyses the reaction L-glutamine + H2O = L-glutamate + NH4(+). This chain is Glutaminase, found in Bacillus mycoides (strain KBAB4) (Bacillus weihenstephanensis).